Here is a 1506-residue protein sequence, read N- to C-terminus: Phosphatidylinositol 3-kinase C2 domain-containing subunit gamma (1506 aa).

The tract at residues 1–34 is disordered; it reads MAYSWQTEPNRTEPQEDGSDTQQFHHTNQHLSSR. A compositionally biased stretch (polar residues) spans 20 to 34; that stretch reads DTQQFHHTNQHLSSR. The PI3K-RBD domain maps to 285–371; the sequence is DTKFRVKISI…IQLHLQKNRD (87 aa). The C2 PI3K-type domain occupies 541–689; sequence LQSHLSFTVC…SPLTLQIDFP (149 aa). One can recognise a PIK helical domain in the interval 704–880; the sequence is RTDHEEPPRE…QELLAALQFC (177 aa). The region spanning 949–1227 is the PI3K/PI4K catalytic domain; that stretch reads DRDACSYFTS…KIKESLECFP (279 aa). The G-loop stretch occupies residues 955–961; it reads YFTSNAS. The segment at 1091 to 1099 is catalytic loop; that stretch reads GVCDRHNDN. Residues 1110–1136 are activation loop; the sequence is HIDFGKFLGHAQTFGGIKRDRAPFIFT. In terms of domain architecture, PX spans 1260–1372; the sequence is LNKTRTIQRV…SFFLSEHIQP (113 aa). The region spanning 1381–1506 is the C2 domain; that stretch reads DPGENSLDKS…KWYPLGNSII (126 aa).

It belongs to the PI3/PI4-kinase family. As to expression, expressed predominantly in liver. Also found in kidney, lung and lymphoid tissue. Down-regulated in BeF3 cells expressing the BCR-ABL oncogene p185.

The protein resides in the membrane. It carries out the reaction a 1,2-diacyl-sn-glycero-3-phospho-(1D-myo-inositol 4-phosphate) + ATP = a 1,2-diacyl-sn-glycero-3-phospho-(1D-myo-inositol-3,4-bisphosphate) + ADP + H(+). The catalysed reaction is a 1,2-diacyl-sn-glycero-3-phospho-(1D-myo-inositol) + ATP = a 1,2-diacyl-sn-glycero-3-phospho-(1D-myo-inositol-3-phosphate) + ADP + H(+). Generates phosphatidylinositol 3-phosphate (PtdIns3P) and phosphatidylinositol 3,4-bisphosphate (PtdIns(3,4)P2) that act as second messengers. May play a role in SDF1A-stimulated chemotaxis. This is Phosphatidylinositol 3-kinase C2 domain-containing subunit gamma (Pik3c2g) from Mus musculus (Mouse).